The sequence spans 433 residues: Indole diterpene prenyltransferase terF (433 aa).

This sequence belongs to the tryptophan dimethylallyltransferase family.

It participates in secondary metabolite biosynthesis. In terms of biological role, indole diterpene prenyltransferase; part of the gene cluster that mediates the biosynthesis of terpendoles, indole-diterpene (IDT) mycotoxins including terpendole I, terpendole K, terpendole C, as well as the kinesin Eg5 inhibitor terpendole E. Terpendoles biosynthesis begins with the synthesis of geranylgeranyl diphosphate (GGPP) by a yet unidentified GGPP synthase. Condensation of indole-3-glycerol phosphate with GGPP by the prenyltransferase terC then forms 3-geranylgeranylindole (3-GGI), followed by epoxidation and cyclization of this intermediate (by the FAD-dependent monooxygeanse terM and the terpene cyclase terB) to form paspaline. The cytochrome monooxygenase terQ then hydroxylates paspalline at C-11 to yield terpendole E. The cytochrome monooxygenase terP converts terpendole E to 13-desoxyterpendole I, and terQ converts 13-desoxyterpendole I into terpendole I. TerF and terK are required for conversion of terpendole I to terpendole C which is further converted to terpendole K. This chain is Indole diterpene prenyltransferase terF, found in Tolypocladium album (Soil fungus).